The chain runs to 43 residues: Protein PsbN (43 aa).

The helical transmembrane segment at 5-27 (TLVAIPISCLLVSFTGYALYTAF) threads the bilayer.

It belongs to the PsbN family.

It is found in the plastid. The protein resides in the chloroplast thylakoid membrane. May play a role in photosystem I and II biogenesis. The protein is Protein PsbN of Sphagnum cuspidatum (Bog moss).